The primary structure comprises 193 residues: Peptidyl-tRNA hydrolase (193 aa).

Y14 lines the tRNA pocket. H19 functions as the Proton acceptor in the catalytic mechanism. Residues F64, N66, and N112 each coordinate tRNA.

The protein belongs to the PTH family. Monomer.

The protein resides in the cytoplasm. It carries out the reaction an N-acyl-L-alpha-aminoacyl-tRNA + H2O = an N-acyl-L-amino acid + a tRNA + H(+). Hydrolyzes ribosome-free peptidyl-tRNAs (with 1 or more amino acids incorporated), which drop off the ribosome during protein synthesis, or as a result of ribosome stalling. In terms of biological role, catalyzes the release of premature peptidyl moieties from peptidyl-tRNA molecules trapped in stalled 50S ribosomal subunits, and thus maintains levels of free tRNAs and 50S ribosomes. This is Peptidyl-tRNA hydrolase from Bartonella quintana (strain Toulouse) (Rochalimaea quintana).